We begin with the raw amino-acid sequence, 208 residues long: Sodium/potassium-transporting ATPase subunit beta-1-interacting protein 4 (208 aa).

Transmembrane regions (helical) follow at residues 10 to 30 (LILLCTLQLVAALERQVFDFL), 35 to 55 (APILANFLHIVATILGLFGTL), 62 to 82 (VIAYALWAAVWVTWNVFLICF), and 151 to 171 (ALQILLALLGFVYACYVTSVF).

Belongs to the NKAIN family. In terms of assembly, interacts with atp1b1 C-terminus.

The protein resides in the cell membrane. The sequence is that of Sodium/potassium-transporting ATPase subunit beta-1-interacting protein 4 (nkain4) from Xenopus tropicalis (Western clawed frog).